Reading from the N-terminus, the 564-residue chain is NAD-dependent malic enzyme (564 aa).

Tyr-102 serves as the catalytic Proton donor. Residue Arg-155 participates in NAD(+) binding. Lys-173 functions as the Proton acceptor in the catalytic mechanism. Residues Glu-244, Asp-245, and Asp-268 each contribute to the a divalent metal cation site. Asp-268 and Asn-417 together coordinate NAD(+).

It belongs to the malic enzymes family. In terms of assembly, homotetramer. It depends on Mg(2+) as a cofactor. Mn(2+) serves as cofactor.

It catalyses the reaction (S)-malate + NAD(+) = pyruvate + CO2 + NADH. It carries out the reaction oxaloacetate + H(+) = pyruvate + CO2. The chain is NAD-dependent malic enzyme from Pseudomonas aeruginosa (strain LESB58).